A 159-amino-acid chain; its full sequence is MTNGNGTPPEGAPSPQLNVLAQYTKDLSFENPNAPSSLAPQQKPPSISVQINVNANNVAQDEFEVTLTVEGKAEHNDKLMFRFELAYAGLFRIVNVPQENLPPLVMIECPRLLFPFAREIIATAVRDGGFPPLMLDPVDFVGMFRQNMERQAAVQQKPS.

It belongs to the SecB family. Homotetramer, a dimer of dimers. One homotetramer interacts with 1 SecA dimer.

It is found in the cytoplasm. One of the proteins required for the normal export of preproteins out of the cell cytoplasm. It is a molecular chaperone that binds to a subset of precursor proteins, maintaining them in a translocation-competent state. It also specifically binds to its receptor SecA. In Nitrobacter hamburgensis (strain DSM 10229 / NCIMB 13809 / X14), this protein is Protein-export protein SecB.